Consider the following 434-residue polypeptide: Serine/threonine transporter SstT (434 aa).

A run of 9 helical transmembrane segments spans residues 14-34 (IVIG…WSFI), 41-61 (FVGA…MSAI), 72-92 (FGTV…AAVA), 135-155 (ALVE…GSGL), 172-192 (TVSA…VGLL), 210-230 (LLML…PFMV), 282-302 (ISIP…VSIM), 316-336 (IFLA…VSGI), and 351-371 (FGIS…IGVV). The disordered stretch occupies residues 413–434 (GKGTAEVVTPEKTNEAEESEQV).

It belongs to the dicarboxylate/amino acid:cation symporter (DAACS) (TC 2.A.23) family.

It localises to the cell membrane. It carries out the reaction L-serine(in) + Na(+)(in) = L-serine(out) + Na(+)(out). The catalysed reaction is L-threonine(in) + Na(+)(in) = L-threonine(out) + Na(+)(out). Functionally, involved in the import of serine and threonine into the cell, with the concomitant import of sodium (symport system). This chain is Serine/threonine transporter SstT, found in Lacticaseibacillus casei (strain BL23) (Lactobacillus casei).